Reading from the N-terminus, the 135-residue chain is Small ribosomal subunit protein uS11 (135 aa).

Residues 1 to 22 form a disordered region; sequence MPPKSRTAAGAKKVRRKEKKNV.

Belongs to the universal ribosomal protein uS11 family. Part of the 30S ribosomal subunit. Interacts with proteins S7 and S18. Binds to IF-3.

Its function is as follows. Located on the platform of the 30S subunit, it bridges several disparate RNA helices of the 16S rRNA. Forms part of the Shine-Dalgarno cleft in the 70S ribosome. This Nocardioides sp. (strain ATCC BAA-499 / JS614) protein is Small ribosomal subunit protein uS11.